The primary structure comprises 193 residues: Probable chemoreceptor glutamine deamidase CheD 1 (193 aa).

Residues 1 to 26 are disordered; sequence MPHTPPAYPAASADHRPPSSPPAEPA.

The protein belongs to the CheD family.

The catalysed reaction is L-glutaminyl-[protein] + H2O = L-glutamyl-[protein] + NH4(+). In terms of biological role, probably deamidates glutamine residues to glutamate on methyl-accepting chemotaxis receptors (MCPs), playing an important role in chemotaxis. This chain is Probable chemoreceptor glutamine deamidase CheD 1, found in Chromobacterium violaceum (strain ATCC 12472 / DSM 30191 / JCM 1249 / CCUG 213 / NBRC 12614 / NCIMB 9131 / NCTC 9757 / MK).